We begin with the raw amino-acid sequence, 357 residues long: Tribbles homolog 3 (357 aa).

Residues 1 to 63 (MRASPLAVPA…PAPVHAPDVT (63 aa)) are disordered. Positions 1–127 (MRASPLAVPA…GHVARPAEVL (127 aa)) are interaction with DDIT3/CHOP. In terms of domain architecture, Protein kinase spans 68 to 316 (LGPYVLLEPE…SGILLHPWLR (249 aa)). Positions 333–357 (DQVVPEGPGLEEAEEEGERDMGLYG) are disordered. Residues 341–350 (GLEEAEEEGE) are compositionally biased toward acidic residues.

This sequence belongs to the protein kinase superfamily. CAMK Ser/Thr protein kinase family. Tribbles subfamily. In terms of assembly, interacts with AKT1, AKT2, MAP2K1 and MAP2K7. Interacts with ATF4. Interacts with DDIT3/CHOP and inhibits its interaction with EP300/P300. Interacts with APOBEC3C. Interacts (via N-terminus) with APOBEC3A. Interacts with RELA.

The protein resides in the nucleus. Functionally, inactive protein kinase which acts as a regulator of the integrated stress response (ISR), a process for adaptation to various stress. Inhibits the transcriptional activity of DDIT3/CHOP and is involved in DDIT3/CHOP-dependent cell death during ER stress. May play a role in programmed neuronal cell death but does not appear to affect non-neuronal cells. Acts as a negative feedback regulator of the ATF4-dependent transcription during the ISR: while TRIB3 expression is promoted by ATF4, TRIB3 protein interacts with ATF4 and inhibits ATF4 transcription activity. Disrupts insulin signaling by binding directly to Akt kinases and blocking their activation. May bind directly to and mask the 'Thr-308' phosphorylation site in AKT1. Interacts with the NF-kappa-B transactivator p65 RELA and inhibits its phosphorylation and thus its transcriptional activation activity. Interacts with MAPK kinases and regulates activation of MAP kinases. Can inhibit APOBEC3A editing of nuclear DNA. This is Tribbles homolog 3 (TRIB3) from Bos taurus (Bovine).